A 68-amino-acid polypeptide reads, in one-letter code: Large ribosomal subunit protein bL32 (68 aa).

The protein belongs to the bacterial ribosomal protein bL32 family.

This Orientia tsutsugamushi (strain Boryong) (Rickettsia tsutsugamushi) protein is Large ribosomal subunit protein bL32.